The chain runs to 3354 residues: Cadherin-23 (3354 aa).

The N-terminal stretch at 1-23 (MRYSLVTCYAVLWLLMLVPGSWG) is a signal peptide. Topologically, residues 24–3064 (QVNRLPFFTN…SVQLPDDMSA (3041 aa)) are extracellular. Cadherin domains follow at residues 34-132 (HFFD…APTF), 133-236 (HNQP…DPIF), 237-348 (INLP…APEF), 349-460 (NSSE…RPIF), 461-561 (SQPL…VPTF), 562-671 (QKDA…PPTF), 672-784 (SKPA…APYY), 779-890 (KDAP…DPTF), 891-995 (RNLP…TPTF), 996-1102 (FPAV…RPIF), 1103-1208 (LQSS…APVF), 1210-1313 (QQQY…AVQF), 1314-1418 (SNAS…SPRF), 1420-1527 (FTSD…PPVI), 1529-1634 (SPFG…APVF), 1635-1744 (QQPH…VPTF), 1745-1851 (PRDY…DPVL), 1852-1959 (LNLP…HPLF), 1960-2069 (TEGT…WPTF), 2070-2174 (SPPT…RPEF), 2175-2293 (LNPI…TPQF), 2297-2402 (GITY…NPIF), 2403-2509 (DQPS…RPQF), 2510-2611 (SKPQ…RPVF), 2614-2722 (PPNG…EPLF), 2729-2846 (SPQY…PPRF), and 2847-2975 (TKAE…EEEF). N-linked (GlcNAc...) asparagine glycans are attached at residues Asn155 and Asn206. Residues Asn349, Asn393, Asn434, Asn466, Asn472, Asn602, Asn694, Asn765, Asn810, Asn827, Asn941, Asn1001, Asn1018, Asn1171, Asn1282, Asn1315, Asn1473, Asn1534, Asn1651, Asn1667, Asn1818, Asn1857, Asn1889, Asn1902, Asn2014, Asn2050, Asn2129, Asn2168, Asn2195, Asn2263, Asn2357, and Asn2369 are each glycosylated (N-linked (GlcNAc...) asparagine). N-linked (GlcNAc...) asparagine glycans are attached at residues Asn2578, Asn2616, Asn2749, Asn2808, Asn2877, Asn2896, Asn2941, and Asn2981. A helical membrane pass occupies residues 3065–3085 (LQMAIIVLAILLFLAAMLFVL). Topologically, residues 3086-3354 (MNWYYRTIHK…MESPLEITEL (269 aa)) are cytoplasmic.

Interacts with USH1C and USH1G. antiparallel heterodimer with PCDH15. Isoform C1: Interacts with CAMSAP3; leading to inhibit CAMSAP3 ability to induce microtubule bundle formation. In terms of tissue distribution, in adult animals relatively high levels of expression are found in testis, skeletal muscle, heart, eye and thymus, and lower expression in kidney, lung and brain. Found in the sensory hair cells of the inner ear.

The protein localises to the cell membrane. Cadherins are calcium-dependent cell adhesion proteins. They preferentially interact with themselves in a homophilic manner in connecting cells. CDH23 is required for establishing and/or maintaining the proper organization of the stereocilia bundle of hair cells in the cochlea and the vestibule during late embryonic/early postnatal development. It is part of the functional network formed by USH1C, USH1G, CDH23 and MYO7A that mediates mechanotransduction in cochlear hair cells. Required for normal hearing. In Mus musculus (Mouse), this protein is Cadherin-23 (Cdh23).